The chain runs to 273 residues: 4-hydroxy-tetrahydrodipicolinate reductase (273 aa).

12 to 17 contributes to the NAD(+) binding site; that stretch reads GAGGRM. R39 contributes to the NADP(+) binding site. Residues 102–104 and 126–129 each bind NAD(+); these read GTT and AANF. The active-site Proton donor/acceptor is H159. H160 lines the (S)-2,3,4,5-tetrahydrodipicolinate pocket. K163 functions as the Proton donor in the catalytic mechanism. 169-170 is a (S)-2,3,4,5-tetrahydrodipicolinate binding site; it reads GT.

The protein belongs to the DapB family. In terms of assembly, homotetramer.

It localises to the cytoplasm. The catalysed reaction is (S)-2,3,4,5-tetrahydrodipicolinate + NAD(+) + H2O = (2S,4S)-4-hydroxy-2,3,4,5-tetrahydrodipicolinate + NADH + H(+). It catalyses the reaction (S)-2,3,4,5-tetrahydrodipicolinate + NADP(+) + H2O = (2S,4S)-4-hydroxy-2,3,4,5-tetrahydrodipicolinate + NADPH + H(+). Its pathway is amino-acid biosynthesis; L-lysine biosynthesis via DAP pathway; (S)-tetrahydrodipicolinate from L-aspartate: step 4/4. Catalyzes the conversion of 4-hydroxy-tetrahydrodipicolinate (HTPA) to tetrahydrodipicolinate. The sequence is that of 4-hydroxy-tetrahydrodipicolinate reductase from Sodalis glossinidius (strain morsitans).